We begin with the raw amino-acid sequence, 288 residues long: Phosphatidylserine decarboxylase proenzyme (288 aa).

Catalysis depends on charge relay system; for autoendoproteolytic cleavage activity residues D90, H147, and S254. S254 functions as the Schiff-base intermediate with substrate; via pyruvic acid; for decarboxylase activity in the catalytic mechanism. Residue S254 is modified to Pyruvic acid (Ser); by autocatalysis.

The protein belongs to the phosphatidylserine decarboxylase family. PSD-B subfamily. Prokaryotic type I sub-subfamily. Heterodimer of a large membrane-associated beta subunit and a small pyruvoyl-containing alpha subunit. The cofactor is pyruvate. Is synthesized initially as an inactive proenzyme. Formation of the active enzyme involves a self-maturation process in which the active site pyruvoyl group is generated from an internal serine residue via an autocatalytic post-translational modification. Two non-identical subunits are generated from the proenzyme in this reaction, and the pyruvate is formed at the N-terminus of the alpha chain, which is derived from the carboxyl end of the proenzyme. The autoendoproteolytic cleavage occurs by a canonical serine protease mechanism, in which the side chain hydroxyl group of the serine supplies its oxygen atom to form the C-terminus of the beta chain, while the remainder of the serine residue undergoes an oxidative deamination to produce ammonia and the pyruvoyl prosthetic group on the alpha chain. During this reaction, the Ser that is part of the protease active site of the proenzyme becomes the pyruvoyl prosthetic group, which constitutes an essential element of the active site of the mature decarboxylase.

The protein localises to the cell membrane. It catalyses the reaction a 1,2-diacyl-sn-glycero-3-phospho-L-serine + H(+) = a 1,2-diacyl-sn-glycero-3-phosphoethanolamine + CO2. The protein operates within phospholipid metabolism; phosphatidylethanolamine biosynthesis; phosphatidylethanolamine from CDP-diacylglycerol: step 2/2. Functionally, catalyzes the formation of phosphatidylethanolamine (PtdEtn) from phosphatidylserine (PtdSer). The polypeptide is Phosphatidylserine decarboxylase proenzyme (Hamiltonella defensa subsp. Acyrthosiphon pisum (strain 5AT)).